The primary structure comprises 337 residues: Schlafen family member 1 (337 aa).

Positions 147–166 (AGGRSPSARPSDRPGDDTQE) are disordered. Residues 156 to 166 (PSDRPGDDTQE) show a composition bias toward basic and acidic residues.

Belongs to the Schlafen family. As to quaternary structure, interacts with DNAJB6; promoting nuclear translocation and ability to promote cell-cycle arrest. As to expression, mainly expressed in the thymus, lymph node and spleen. Specifically expressed in T-lineage cells, but not in B-cells. Strongly up-regulated during the differentiation from CD4(+)CD8(+) double-positive (DP) to CD4(+) or CD8(+) single-positive (SP) thymocytes. Highly expressed in quiescent single-positive thymocytes and T-cells. The expression substantially decreases after TCR (T-cell receptor)-mediated activation.

The protein resides in the cytoplasm. It is found in the nucleus. Functionally, protein expressed in resting T-cells, which is required for maintaining T-cells in the quiescent state. Acts by promoting cell-cycle arrest of T-cells through inhibiting the expression of cyclin-D1 (CCND1). This Mus musculus (Mouse) protein is Schlafen family member 1.